The primary structure comprises 491 residues: UDP-N-acetylmuramate--L-alanine ligase (491 aa).

Residue 126–132 (GTHGKTT) coordinates ATP.

It belongs to the MurCDEF family.

The protein localises to the cytoplasm. It carries out the reaction UDP-N-acetyl-alpha-D-muramate + L-alanine + ATP = UDP-N-acetyl-alpha-D-muramoyl-L-alanine + ADP + phosphate + H(+). It functions in the pathway cell wall biogenesis; peptidoglycan biosynthesis. Functionally, cell wall formation. This chain is UDP-N-acetylmuramate--L-alanine ligase, found in Shigella sonnei (strain Ss046).